We begin with the raw amino-acid sequence, 235 residues long: Large ribosomal subunit protein uL1 (235 aa).

This sequence belongs to the universal ribosomal protein uL1 family. Part of the 50S ribosomal subunit.

Its function is as follows. Binds directly to 23S rRNA. The L1 stalk is quite mobile in the ribosome, and is involved in E site tRNA release. Protein L1 is also a translational repressor protein, it controls the translation of the L11 operon by binding to its mRNA. The chain is Large ribosomal subunit protein uL1 from Methylibium petroleiphilum (strain ATCC BAA-1232 / LMG 22953 / PM1).